The following is a 191-amino-acid chain: Peptidyl-tRNA hydrolase (191 aa).

A tRNA-binding site is contributed by Tyr14. Catalysis depends on His19, which acts as the Proton acceptor. Tyr64, Asn66, and Asn112 together coordinate tRNA.

This sequence belongs to the PTH family. In terms of assembly, monomer.

The protein resides in the cytoplasm. The catalysed reaction is an N-acyl-L-alpha-aminoacyl-tRNA + H2O = an N-acyl-L-amino acid + a tRNA + H(+). In terms of biological role, hydrolyzes ribosome-free peptidyl-tRNAs (with 1 or more amino acids incorporated), which drop off the ribosome during protein synthesis, or as a result of ribosome stalling. Catalyzes the release of premature peptidyl moieties from peptidyl-tRNA molecules trapped in stalled 50S ribosomal subunits, and thus maintains levels of free tRNAs and 50S ribosomes. The sequence is that of Peptidyl-tRNA hydrolase from Lachnoclostridium phytofermentans (strain ATCC 700394 / DSM 18823 / ISDg) (Clostridium phytofermentans).